Here is a 440-residue protein sequence, read N- to C-terminus: Transposon Ty1-ER2 Gag polyprotein (440 aa).

Composition is skewed to polar residues over residues 1 to 10, 48 to 60, and 127 to 152; these read MESQQLSNYP, TKAN…TPAS, and QSQF…GNTF. Disordered regions lie at residues 1 to 93, 126 to 173, and 352 to 440; these read MESQ…MMTQ, PQSQ…RPPP, and GSRN…PETY. The span at 153–165 shows a compositional bias: low complexity; that stretch reads TDSSSADSDMTST. The segment at 299 to 401 is RNA-binding; that stretch reads NNGIHINNKV…NSKSKTARAH (103 aa). Low complexity predominate over residues 402 to 418; that stretch reads NVSTSNNSPSTDNDSIS. S416 carries the phosphoserine modification. Over residues 419–428 the composition is skewed to polar residues; sequence KSTTEPIQLN. The span at 429–440 shows a compositional bias: basic and acidic residues; the sequence is NKHDLHLRPETY.

Homotrimer.

The protein localises to the cytoplasm. Functionally, capsid protein (CA) is the structural component of the virus-like particle (VLP), forming the shell that encapsulates the retrotransposons dimeric RNA genome. The particles are assembled from trimer-clustered units and there are holes in the capsid shells that allow for the diffusion of macromolecules. CA also has nucleocapsid-like chaperone activity, promoting primer tRNA(i)-Met annealing to the multipartite primer-binding site (PBS), dimerization of Ty1 RNA and initiation of reverse transcription. This chain is Transposon Ty1-ER2 Gag polyprotein (TY1A-ER2), found in Saccharomyces cerevisiae (strain ATCC 204508 / S288c) (Baker's yeast).